Here is a 354-residue protein sequence, read N- to C-terminus: Guanine nucleotide-binding protein G(o) subunit alpha (354 aa).

Glycine 2 is lipidated: N-myristoyl glycine. Cysteine 3 carries the S-palmitoyl cysteine lipid modification. One can recognise a G-alpha domain in the interval 32–354; the sequence is KDIKLLLLGA…ANNLRGCGLY (323 aa). Residues 35-48 form a G1 motif region; the sequence is KLLLLGAGESGKST. Residues 40–47, 176–182, 201–205, 270–273, and alanine 326 each bind GTP; these read GAGESGKS, LRTRVKT, DVGGQ, and NKKD. 2 residues coordinate Mg(2+): serine 47 and threonine 182. The tract at residues 174–182 is G2 motif; the sequence is DILRTRVKT. Residues 197–206 form a G3 motif region; sequence FKLFDVGGQR. A G4 motif region spans residues 266–273; that stretch reads ILFLNKKD. The tract at residues 324 to 329 is G5 motif; the sequence is TCATDT.

The protein belongs to the G-alpha family. G(i/o/t/z) subfamily. In terms of assembly, g proteins are composed of 3 units; alpha, beta and gamma. The alpha chain contains the guanine nucleotide binding site. Interacts (in GDP-bound form) with gpr-1; gpr-1 forms a complex with gpr-2 and lin-5. Interacts (in GDP-bound form) with gpb-1. Interacts (in GDP-bound form) with gbas-1 (via GBA motif); the interaction leads to activation of goa-1. Expressed in the ASER neuron and the intestine.

In terms of biological role, guanine nucleotide-binding proteins (G proteins) are involved as modulators or transducers in various transmembrane signaling systems. In the 1-cell embryo, probably together with gpa-16, controls nuclear rotation and spindle elongation during mitosis. During the first embryonic cell divisions, plays a role in gpr-1/2 cortical localization and in the proper orientation of EMS blastomere mitotic spindle. Polarity determinants (par genes) may regulate lin-5/gpr-1/gpr-2/goa-1 locally to create the asymmetric forces that drive spindle movement. Involved in chemosensory responses to attractive and repellent odors detected by AWC and AWB sensory neurons, respectively. In ASER neurons, acts downstream of glr-3 to regulate cold avoidance behavior via calcium signaling, and it may also play a role in sensing cold in the intestine. Negatively regulates axon regeneration after injury downstream of the inhibitory compound arachidonoyl ethanolamide (AEA) by antagonizing the activation of the JNK pathway (mlk-1/mek-1/kgb-1). In neurons, may negatively regulate diacylglycerol (DAG) production mediated by egl-30 signaling cascade and thereby negatively regulates acetylcholine release. Couples to the muscarinic acetylcholine receptor gar-2 to negatively regulate cholinergic receptor activity in the presence of high levels of acetylcholine in ventral cord motor neurons. Plays a role in the navigational capacity of sperm and the targeting of sperm derived from males to the fertilization site in the uterus of hermaphrodites. Involved in egg-laying and in regulating dopamine-mediated locomotion. Most likely couples to the dopamine receptors dop-2 and dop-3 to positively regulate the dopamine-mediated suppression of crh-1/CREB1 transcription factor activation in cholinergic SIA neurons in the presence of food. The polypeptide is Guanine nucleotide-binding protein G(o) subunit alpha (Caenorhabditis elegans).